Here is a 414-residue protein sequence, read N- to C-terminus: MAGKGRIIFHIDMNSFYASVEMAYDPSLRGKPIAVAGNVKERKGIIVTCSYEARARGVKTTMPVWRAKRLCPELIVVPPNFDRYRSSSKEMFSILREYTDLVEPVSIDEGYMDITDTPHSHRAYETAEDIQARLQKELLLPSSIGIAPNKFLAKMASDMKKPLGITILRKRELPDVLWPLPIEEMHGIGTKTAEKIKTLGIKTIGDLAKGDEHALKTLLGINGPRLKDKANGIHPAEVNPERIYEFKSVGNSSTLSHDSADWDELTGVFDRLALSVSERLQRKEVMACRLFIMIRYADWKTVTRSMTLSNPADQKKDIMEAAMELFDKHWNQNPVRLLGITGTELVEKQQAYKQLDLFSFKEDAKDEPIFQMMNELNEKYGQNLIRKGAVIKKEESKTRGTSFNRDFFQDEKKR.

The UmuC domain occupies 8-189 (IFHIDMNSFY…LPIEEMHGIG (182 aa)). 2 residues coordinate Mg(2+): Asp-12 and Asp-108. Glu-109 is an active-site residue. A disordered region spans residues 394–414 (EESKTRGTSFNRDFFQDEKKR).

It belongs to the DNA polymerase type-Y family. Monomer. Mg(2+) is required as a cofactor.

The protein resides in the cytoplasm. The enzyme catalyses DNA(n) + a 2'-deoxyribonucleoside 5'-triphosphate = DNA(n+1) + diphosphate. Functionally, poorly processive, error-prone DNA polymerase involved in untargeted mutagenesis. Copies undamaged DNA at stalled replication forks, which arise in vivo from mismatched or misaligned primer ends. These misaligned primers can be extended by PolIV. Exhibits no 3'-5' exonuclease (proofreading) activity. May be involved in translesional synthesis, in conjunction with the beta clamp from PolIII. This Bacillus velezensis (strain DSM 23117 / BGSC 10A6 / LMG 26770 / FZB42) (Bacillus amyloliquefaciens subsp. plantarum) protein is DNA polymerase IV.